A 124-amino-acid chain; its full sequence is Fluoride-specific ion channel FluC (124 aa).

4 helical membrane passes run 5–25, 32–52, 67–87, and 96–116; these read VYIA…SGLV, SFPY…GLVM, FAIT…SFET, and LLIA…CTWI. Residues Gly75 and Thr78 each coordinate Na(+).

The protein belongs to the fluoride channel Fluc/FEX (TC 1.A.43) family.

Its subcellular location is the cell inner membrane. It catalyses the reaction fluoride(in) = fluoride(out). Its activity is regulated as follows. Na(+) is not transported, but it plays an essential structural role and its presence is essential for fluoride channel function. Functionally, fluoride-specific ion channel. Important for reducing fluoride concentration in the cell, thus reducing its toxicity. This chain is Fluoride-specific ion channel FluC, found in Geobacter sp. (strain M21).